The chain runs to 175 residues: NADH-ubiquinone oxidoreductase chain 6 (175 aa).

A run of 5 helical transmembrane segments spans residues 1 to 21 (MMTY…VGFS), 25 to 45 (SPIY…GIIM), 47 to 67 (FGGS…MLVV), 88 to 108 (TVMG…LYVL), and 149 to 169 (YGAW…LVIL).

Belongs to the complex I subunit 6 family. As to quaternary structure, core subunit of respiratory chain NADH dehydrogenase (Complex I) which is composed of 45 different subunits.

It is found in the mitochondrion inner membrane. The catalysed reaction is a ubiquinone + NADH + 5 H(+)(in) = a ubiquinol + NAD(+) + 4 H(+)(out). Its function is as follows. Core subunit of the mitochondrial membrane respiratory chain NADH dehydrogenase (Complex I) which catalyzes electron transfer from NADH through the respiratory chain, using ubiquinone as an electron acceptor. Essential for the catalytic activity and assembly of complex I. This chain is NADH-ubiquinone oxidoreductase chain 6 (MT-ND6), found in Equus asinus (Donkey).